A 219-amino-acid chain; its full sequence is Protein-L-isoaspartate O-methyltransferase (219 aa).

S60 is a catalytic residue.

Belongs to the methyltransferase superfamily. L-isoaspartyl/D-aspartyl protein methyltransferase family.

It is found in the cytoplasm. It carries out the reaction [protein]-L-isoaspartate + S-adenosyl-L-methionine = [protein]-L-isoaspartate alpha-methyl ester + S-adenosyl-L-homocysteine. Catalyzes the methyl esterification of L-isoaspartyl residues in peptides and proteins that result from spontaneous decomposition of normal L-aspartyl and L-asparaginyl residues. It plays a role in the repair and/or degradation of damaged proteins. The polypeptide is Protein-L-isoaspartate O-methyltransferase (Rhodospirillum rubrum (strain ATCC 11170 / ATH 1.1.1 / DSM 467 / LMG 4362 / NCIMB 8255 / S1)).